Here is a 36-residue protein sequence, read N- to C-terminus: Cytochrome b6-f complex subunit 7 (36 aa).

Residues 1 to 5 are Lumenal-facing; sequence NAAAE. Residues 6–28 form a helical membrane-spanning segment; sequence IFRIAAVMNGLTLVGVAIGFVLL. Residues 29–36 are Stromal-facing; sequence RIEATVEE.

The protein belongs to the PetM family. The 4 large subunits of the cytochrome b6-f complex are cytochrome b6, subunit IV (17 kDa polypeptide, PetD), cytochrome f and the Rieske protein, while the 4 small subunits are PetG, PetL, PetM and PetN. The complex functions as a dimer.

The protein localises to the plastid. The protein resides in the chloroplast thylakoid membrane. Functionally, component of the cytochrome b6-f complex, which mediates electron transfer between photosystem II (PSII) and photosystem I (PSI), cyclic electron flow around PSI, and state transitions. This chain is Cytochrome b6-f complex subunit 7, found in Spinacia oleracea (Spinach).